A 509-amino-acid polypeptide reads, in one-letter code: UDP-N-acetylmuramoylalanine--D-glutamate ligase (509 aa).

116-122 (GTNGKST) provides a ligand contact to ATP.

This sequence belongs to the MurCDEF family.

Its subcellular location is the cytoplasm. It catalyses the reaction UDP-N-acetyl-alpha-D-muramoyl-L-alanine + D-glutamate + ATP = UDP-N-acetyl-alpha-D-muramoyl-L-alanyl-D-glutamate + ADP + phosphate + H(+). Its pathway is cell wall biogenesis; peptidoglycan biosynthesis. Functionally, cell wall formation. Catalyzes the addition of glutamate to the nucleotide precursor UDP-N-acetylmuramoyl-L-alanine (UMA). The chain is UDP-N-acetylmuramoylalanine--D-glutamate ligase from Wolbachia pipientis wMel.